The primary structure comprises 199 residues: Probable GTP-binding protein EngB (199 aa).

The EngB-type G domain maps to 28-199; the sequence is DLPEIALAGR…DSWDAILEQV (172 aa). Residues 36 to 43, 63 to 67, 81 to 84, 148 to 151, and 180 to 182 contribute to the GTP site; these read GRSNVGKS, GKTQL, DVPG, TKAD, and FSS. Residues Ser43 and Thr65 each coordinate Mg(2+).

Belongs to the TRAFAC class TrmE-Era-EngA-EngB-Septin-like GTPase superfamily. EngB GTPase family. It depends on Mg(2+) as a cofactor.

In terms of biological role, necessary for normal cell division and for the maintenance of normal septation. The sequence is that of Probable GTP-binding protein EngB from Streptococcus pyogenes serotype M6 (strain ATCC BAA-946 / MGAS10394).